The chain runs to 130 residues: Glycine cleavage system H protein (130 aa).

The Lipoyl-binding domain maps to 24-106 (IYSVGITEHA…YTDGWLFRIK (83 aa)). At Lys65 the chain carries N6-lipoyllysine.

Belongs to the GcvH family. In terms of assembly, the glycine cleavage system is composed of four proteins: P, T, L and H. (R)-lipoate serves as cofactor.

The glycine cleavage system catalyzes the degradation of glycine. The H protein shuttles the methylamine group of glycine from the P protein to the T protein. The polypeptide is Glycine cleavage system H protein (Pectobacterium atrosepticum (strain SCRI 1043 / ATCC BAA-672) (Erwinia carotovora subsp. atroseptica)).